Here is a 127-residue protein sequence, read N- to C-terminus: Small ribosomal subunit protein bS6 (127 aa).

Belongs to the bacterial ribosomal protein bS6 family.

Functionally, binds together with bS18 to 16S ribosomal RNA. In Buchnera aphidicola subsp. Cinara cedri (strain Cc), this protein is Small ribosomal subunit protein bS6.